Reading from the N-terminus, the 326-residue chain is Peroxidase 3 (326 aa).

The first 24 residues, Met-1–Ala-24, serve as a signal peptide directing secretion. Disulfide bonds link Cys-35/Cys-113, Cys-68/Cys-73, Cys-119/Cys-321, and Cys-198/Cys-231. His-66 (proton acceptor) is an active-site residue. Residues Asp-67, Val-70, Gly-72, Asp-74, and Ser-76 each coordinate Ca(2+). Residues Asn-80 and Asn-138 are each glycosylated (N-linked (GlcNAc...) asparagine). A substrate-binding site is contributed by Pro-161. The N-linked (GlcNAc...) asparagine glycan is linked to Asn-166. Heme b is bound at residue His-191. A Ca(2+)-binding site is contributed by Thr-192. N-linked (GlcNAc...) asparagine glycosylation is found at Asn-207 and Asn-237. Residues Asp-244, Ser-247, and Asp-252 each coordinate Ca(2+).

This sequence belongs to the peroxidase family. Classical plant (class III) peroxidase subfamily. The cofactor is heme b. It depends on Ca(2+) as a cofactor. In terms of tissue distribution, expressed in root cells.

The protein localises to the secreted. It carries out the reaction 2 a phenolic donor + H2O2 = 2 a phenolic radical donor + 2 H2O. Its function is as follows. Removal of H(2)O(2), oxidation of toxic reductants, biosynthesis and degradation of lignin, suberization, auxin catabolism, response to environmental stresses such as wounding, pathogen attack and oxidative stress. These functions might be dependent on each isozyme/isoform in each plant tissue. This Arabidopsis thaliana (Mouse-ear cress) protein is Peroxidase 3 (PER3).